Consider the following 131-residue polypeptide: Leptin receptor overlapping transcript-like 1 (131 aa).

4 helical membrane-spanning segments follow: residues 7 to 27, 32 to 52, 69 to 89, and 100 to 120; these read LISL…GCAL, QYWP…YCIA, LAIF…IVFA, and ALVL…FLVF.

This sequence belongs to the OB-RGRP/VPS55 family.

The protein localises to the membrane. Functionally, negatively regulates growth hormone (GH) receptor cell surface expression in liver. May play a role in liver resistance to GH during periods of reduced nutrient availability. This chain is Leptin receptor overlapping transcript-like 1 (LEPROTL1), found in Bos taurus (Bovine).